The primary structure comprises 302 residues: Sulfate adenylyltransferase subunit 2 (302 aa).

The interval 280–302 is disordered; sequence RQGRAIDHDQSGSMELKKRQGYF.

Belongs to the PAPS reductase family. CysD subfamily. As to quaternary structure, heterodimer composed of CysD, the smaller subunit, and CysN.

It catalyses the reaction sulfate + ATP + H(+) = adenosine 5'-phosphosulfate + diphosphate. Its pathway is sulfur metabolism; hydrogen sulfide biosynthesis; sulfite from sulfate: step 1/3. With CysN forms the ATP sulfurylase (ATPS) that catalyzes the adenylation of sulfate producing adenosine 5'-phosphosulfate (APS) and diphosphate, the first enzymatic step in sulfur assimilation pathway. APS synthesis involves the formation of a high-energy phosphoric-sulfuric acid anhydride bond driven by GTP hydrolysis by CysN coupled to ATP hydrolysis by CysD. The chain is Sulfate adenylyltransferase subunit 2 from Vibrio cholerae serotype O1 (strain ATCC 39541 / Classical Ogawa 395 / O395).